We begin with the raw amino-acid sequence, 726 residues long: AP-1 complex subunit beta-1 (726 aa).

It belongs to the adaptor complexes large subunit family. As to quaternary structure, adaptor protein complex 1 (AP-1) is a heterotetramer composed of two large adaptins (gamma-type subunit APL4 and beta-type subunit APL2), a medium adaptin (mu-type subunit APM1) and a small adaptin (sigma-type subunit APS1). Interacts with CHC1. Interacts with APM2, probably forming an alternative AP-1-like complex.

It localises to the cell membrane. It is found in the membrane. The protein localises to the coated pit. Functionally, adaptins are components of the adaptor complexes which link clathrin to receptors in coated vesicles. Clathrin-associated protein complexes are believed to interact with the cytoplasmic tails of membrane proteins, leading to their selection and concentration. The AP-1 complex interacts directly with clathrin. The polypeptide is AP-1 complex subunit beta-1 (APL2) (Saccharomyces cerevisiae (strain ATCC 204508 / S288c) (Baker's yeast)).